A 184-amino-acid polypeptide reads, in one-letter code: Ribosome-recycling factor (184 aa).

It belongs to the RRF family.

The protein resides in the cytoplasm. Its function is as follows. Responsible for the release of ribosomes from messenger RNA at the termination of protein biosynthesis. May increase the efficiency of translation by recycling ribosomes from one round of translation to another. The protein is Ribosome-recycling factor of Desulfotalea psychrophila (strain LSv54 / DSM 12343).